The chain runs to 155 residues: Small ribosomal subunit protein bS6 (155 aa).

Positions 94 to 155 (EKHEEGPSAM…RPRRPREDRV (62 aa)) are disordered.

The protein belongs to the bacterial ribosomal protein bS6 family.

Functionally, binds together with bS18 to 16S ribosomal RNA. The protein is Small ribosomal subunit protein bS6 of Rhizobium leguminosarum bv. trifolii (strain WSM2304).